The following is a 481-amino-acid chain: Ribulose bisphosphate carboxylase large chain (481 aa).

A propeptide spanning residues Met-1–Ser-2 is cleaved from the precursor. Pro-3 carries the N-acetylproline modification. The residue at position 14 (Lys-14) is an N6,N6,N6-trimethyllysine. The substrate site is built by Asn-123 and Thr-173. Lys-175 serves as the catalytic Proton acceptor. Position 177 (Lys-177) interacts with substrate. Mg(2+) is bound by residues Lys-201, Asp-203, and Glu-204. Lys-201 bears the N6-carboxylysine mark. His-294 functions as the Proton acceptor in the catalytic mechanism. Residues Arg-295, His-327, and Ser-379 each coordinate substrate.

Belongs to the RuBisCO large chain family. Type I subfamily. In terms of assembly, heterohexadecamer of 8 large chains and 8 small chains; disulfide-linked. The disulfide link is formed within the large subunit homodimers. Mg(2+) serves as cofactor. The disulfide bond which can form in the large chain dimeric partners within the hexadecamer appears to be associated with oxidative stress and protein turnover.

The protein localises to the plastid. It catalyses the reaction 2 (2R)-3-phosphoglycerate + 2 H(+) = D-ribulose 1,5-bisphosphate + CO2 + H2O. The catalysed reaction is D-ribulose 1,5-bisphosphate + O2 = 2-phosphoglycolate + (2R)-3-phosphoglycerate + 2 H(+). In terms of biological role, ruBisCO catalyzes two reactions: the carboxylation of D-ribulose 1,5-bisphosphate, the primary event in carbon dioxide fixation, as well as the oxidative fragmentation of the pentose substrate in the photorespiration process. Both reactions occur simultaneously and in competition at the same active site. The polypeptide is Ribulose bisphosphate carboxylase large chain (Cuscuta obtusiflora (Peruvian dodder)).